The primary structure comprises 629 residues: MAQVQLQGQTPNGSTAAVTSAPATSGGATATQFGNTSLYVGDLDFNVTDSQLFDAFGQMGTVVTVRVCRDLVTRRSLGYGYVNFTNPQDAARAIQELNYIPLYGKPIRVMYSHRDPSVRRSGAGNIFIKNLDESIDHKALHDTFSSFGNIVSCKVAVDSSGQSKGYGFVQYANEESAQKAIEKLNGMLLNDKQVYVGPFLRRQERDSTANKTKFTNVYVKNLAESTTDDDLKNAFGEYGKITSAVVMKDGEGKSKGFGFVNFENADDAARAVESLNGHKFDDKEWYVGRAQKKSERETELRVRYEQNLKEAADKFQSSNLYVKNLDPSISDEKLKEIFSPFGTVTSSKVMRDPNGTSKGSGFVAFATPEEATEAMSQLSGKMIESKPLYVAIAQRKEDRRVRLQAQFSQVRPVAMQPSVGPRMPVYPPGGPGIGQQMFYGQAPPAMIPPQPGYGYQQQLVPGMRPGGGPVPSFFMPMVQPQQQRPGGGRRPGGIQHSQQQNPMMQQQMHPRGRMFRYPQGRGGSGDVPPYDMGNNMPLTIGALASNLSNATPEQQRTMLGEVLYPLVEQVEAESAAKVTGMLLEMDQTEVLHLLESPEALKAKVAEAMDVLRSVAAGGATEQLASLNLS.

Polar residues predominate over residues 1–12; that stretch reads MAQVQLQGQTPN. Positions 1 to 25 are disordered; it reads MAQVQLQGQTPNGSTAAVTSAPATS. Positions 13–25 are enriched in low complexity; sequence GSTAAVTSAPATS. RRM domains follow at residues 36–114, 124–201, 215–292, and 318–395; these read TSLY…YSHR, GNIF…PFLR, TNVY…RAQK, and SNLY…IAQR. Positions 480–507 are disordered; the sequence is PQQQRPGGGRRPGGIQHSQQQNPMMQQQ. Low complexity predominate over residues 492–507; sequence GGIQHSQQQNPMMQQQ. Positions 539 to 616 constitute a PABC domain; that stretch reads TIGALASNLS…AMDVLRSVAA (78 aa).

This sequence belongs to the polyadenylate-binding protein type-1 family. As to quaternary structure, interacts with eIF-iso4G. Interacts with ERD15/CID1 and CID7. Interacts with Turnip mosaic virus (TuMV) VPg-Pro and RNA-dependent RNA polymerase (RdRp). As to expression, expressed in all organs (at the protein level) but under distinct spatial and temporal regulation within each organ.

The protein localises to the cytoplasm. The protein resides in the nucleus. Functionally, binds the poly(A) tail of mRNA. Appears to be an important mediator of the multiple roles of the poly(A) tail in mRNA biogenesis, stability and translation. In the cytoplasm, affects both translation and mRNA decay. Stimulates translation by interaction with translation initiation factor eIF4G, a subunit of the cap-binding complex eIF4F, bringing the 5'- and 3'-ends of the mRNA in proximity. The formation of this circular mRNP structure appears to be critical for the synergistic effects of the cap and the poly(A) tail in facilitating translation initiation, recycling of ribosomes, and mRNA stability. During infection with potyvirus TuMV, acts as a potential integral component of the viral replicase complex that could play an important role in the regulation of potyviral RNA-dependent RNA polymerase (RdRp). Binds to uridylated mRNAs and determines the size of uridine extensions. Limits uridine extension by URT1, likely by binding to the oligo(A) tail and preventing URT1 access. This chain is Polyadenylate-binding protein 2 (PAB2), found in Arabidopsis thaliana (Mouse-ear cress).